We begin with the raw amino-acid sequence, 362 residues long: Prostaglandin F2-alpha receptor (362 aa).

Topologically, residues 1–31 (MSTNNSVQPVSPASELLSNTTCQLEEDLSIS) are extracellular. Residues N4 and N19 are each glycosylated (N-linked (GlcNAc...) asparagine). The chain crosses the membrane as a helical span at residues 32 to 54 (FSIIFMTVGILSNSLAIAILMKA). Over 55-69 (YQRFRQKYKSSFLLL) the chain is Cytoplasmic. The helical transmembrane segment at 70 to 90 (ASALVITDFFGHLINGTIAVF) threads the bilayer. Residues 91 to 109 (VYASDKDWIYFDKSNILCS) are Extracellular-facing. Residues C108 and C186 are joined by a disulfide bond. Residues 110-131 (IFGICMVFSGLCPLFLGSLMAI) traverse the membrane as a helical segment. At 132–152 (ERCIGVTKPIFHSTKITTKHV) the chain is on the cytoplasmic side. A helical membrane pass occupies residues 153–175 (KMMLSGVCFFAVFVALLPILGHR). Residues 176–198 (DYKIQASRTWCFYKTDQIKDWED) are Extracellular-facing. Residues 199 to 224 (RFYLLLFAFLGLLALGISFVCNAITG) form a helical membrane-spanning segment. Residues 225-250 (ISLLKVKFRSQQHRQGRSHHFEMVIQ) are Cytoplasmic-facing. Residues 251-267 (LLGIMCVSCICWSPFLV) traverse the membrane as a helical segment. The Extracellular portion of the chain corresponds to 268–285 (TMASIGMNIQDFKDSCER). A helical transmembrane segment spans residues 286-307 (TLFTLRMATWNQILDPWVYILL). The Cytoplasmic segment spans residues 308-362 (RKAVLRNLYVCTRRCCGVHVISLHVWELSSIKNSLKVAAISDLPVTEKVTQQTST).

The protein belongs to the G-protein coupled receptor 1 family.

The protein localises to the cell membrane. In terms of biological role, receptor for prostaglandin F2-alpha (PGF2-alpha). The activity of this receptor is mediated by G proteins which activate a phosphatidylinositol-calcium second messenger system. Initiates luteolysis in the corpus luteum. This is Prostaglandin F2-alpha receptor (PTGFR) from Ovis aries (Sheep).